We begin with the raw amino-acid sequence, 440 residues long: Enolase (440 aa).

Substrate contacts are provided by H159 and E168. E211 serves as the catalytic Proton donor. D245, E296, and D321 together coordinate Mg(2+). Residues E296 and D321 each contribute to the substrate site. Residue K346 is the Proton acceptor of the active site. Residues 373–376 (SHRS) and K397 contribute to the substrate site.

It belongs to the enolase family. In terms of assembly, homodimer. The cofactor is Mg(2+).

It is found in the cytoplasm. It catalyses the reaction (2R)-2-phosphoglycerate = phosphoenolpyruvate + H2O. It participates in carbohydrate degradation; glycolysis; pyruvate from D-glyceraldehyde 3-phosphate: step 4/5. This is Enolase (eno-1) from Tuber borchii (White truffle).